The primary structure comprises 607 residues: Actin-related protein 5 (607 aa).

Residue lysine 283 forms a Glycyl lysine isopeptide (Lys-Gly) (interchain with G-Cter in SUMO2) linkage. Coiled coils occupy residues 288-327 (TLTSEEKQERRQQQLRRLQELNARRREEKLQLDQERLDRL) and 355-384 (EELQSYIQKLSIAVEQAKQKILQAEVNLEV). Positions 584 to 596 (SRSSDAQASSKGS) are enriched in low complexity. The tract at residues 584-607 (SRSSDAQASSKGSAAGGGGAGEQA) is disordered. The segment covering 597–607 (AAGGGGAGEQA) has biased composition (gly residues).

It belongs to the actin family. ARP5 subfamily. As to quaternary structure, component of the chromatin remodeling INO80 complex; specifically part of a complex module associated with the helicase ATP-binding and the helicase C-terminal domain of INO80. Interacts with DDB1. Interacts with ACTR8; the interaction is observed in asynchronous (interphase) cells but not in metaphase-arrested cells indicative for a possible dissociation of the INO80 complex in mitotic cells.

Its subcellular location is the nucleus. The protein localises to the cytoplasm. In terms of biological role, proposed core component of the chromatin remodeling INO80 complex which is involved in transcriptional regulation, DNA replication and probably DNA repair. Involved in DNA double-strand break repair and UV-damage excision repair. The polypeptide is Actin-related protein 5 (ACTR5) (Homo sapiens (Human)).